The primary structure comprises 238 residues: Transcription factor PCL1 (238 aa).

Low complexity predominate over residues R71–G90. The interval R71–A119 is disordered. The span at S100–G109 shows a compositional bias: gly residues. Residues S115–K174 constitute a DNA-binding region (myb-like GARP).

It localises to the nucleus. Functionally, transcription factor that is essential for the generation of the circadian clock oscillation. Binds to specific sites on CCA1 promoter leading to CCA1 activation. The sequence is that of Transcription factor PCL1 (PCL1) from Oryza sativa subsp. japonica (Rice).